Consider the following 235-residue polypeptide: tRNA (guanine-N(1)-)-methyltransferase (235 aa).

Residues G112 and 131 to 136 (LGDFVL) contribute to the S-adenosyl-L-methionine site.

This sequence belongs to the RNA methyltransferase TrmD family. In terms of assembly, homodimer.

It localises to the cytoplasm. It carries out the reaction guanosine(37) in tRNA + S-adenosyl-L-methionine = N(1)-methylguanosine(37) in tRNA + S-adenosyl-L-homocysteine + H(+). Functionally, specifically methylates guanosine-37 in various tRNAs. The polypeptide is tRNA (guanine-N(1)-)-methyltransferase (Synechococcus elongatus (strain ATCC 33912 / PCC 7942 / FACHB-805) (Anacystis nidulans R2)).